Here is a 1019-residue protein sequence, read N- to C-terminus: Limulus clotting factor C (1019 aa).

Positions 1 to 25 are cleaved as a signal peptide; the sequence is MVLASFLVSGLVLGLLAQKMRPVQS. One can recognise an EGF-like domain in the interval 102–137; it reads YGTWCSGECQCKNGGICDQRTGACACRDRYEGVHCE. Cystine bridges form between Cys-106-Cys-118, Cys-112-Cys-125, Cys-127-Cys-136, Cys-142-Cys-182, Cys-168-Cys-195, Cys-199-Cys-241, Cys-227-Cys-254, Cys-260-Cys-308, Cys-294-Cys-321, Cys-331-Cys-350, Cys-354-Cys-374, Cys-436-Cys-447, Cys-464-Cys-564, Cys-538-Cys-556, Cys-576-Cys-621, Cys-607-Cys-634, and Cys-720-Cys-748. 3 consecutive Sushi domains span residues 140 to 197, 198 to 256, and 258 to 323; these read KGCP…KCIR, ECAM…QCKN, and VFCP…SCVK. Positions 325 to 421 constitute an LCCL domain; sequence ADREVDCDSK…EELKSLARSF (97 aa). The region spanning 436–568 is the C-type lectin domain; the sequence is CPDGWFEVDE…PSSFACMMDL (133 aa). N-linked (GlcNAc...) asparagine glycans are attached at residues Asn-523 and Asn-534. Sushi domains follow at residues 574 to 636 and 689 to 750; these read AKCD…RCIK and PRSS…SCIP. N-linked (GlcNAc...) asparagine glycosylation is found at Asn-624, Asn-740, and Asn-767. The Peptidase S1 domain occupies 763–1019; the sequence is IWNGNSTEIG…VFLSWIRQFI (257 aa). Cys-794 and Cys-810 form a disulfide bridge. Catalysis depends on charge relay system residues His-809 and Asp-865. A glycan (N-linked (GlcNAc...) asparagine) is linked at Asn-912. Cys-932 and Cys-951 are oxidised to a cystine. Asp-960 contributes to the substrate binding site. A disulfide bridge connects residues Cys-962 and Cys-996. Ser-966 acts as the Charge relay system in catalysis.

It belongs to the peptidase S1 family. As to quaternary structure, heterodimer of a light chain and a heavy chain linked by a disulfide bond.

It is found in the secreted. It carries out the reaction Selective cleavage of 103-Arg-|-Ser-104 and 124-Ile-|-Ile-125 bonds in Limulus clotting factor B to form activated factor B. Cleavage of -Pro-Arg-|-Xaa- bonds in synthetic substrates.. Its activity is regulated as follows. Activated by Gram-negative bacterial lipopolysaccharides and chymotrypsin. In terms of biological role, this enzyme is closely associated with an endotoxin-sensitive hemolymph coagulation system which may play important roles in both hemostasis and host defense mechanisms. Its active form catalyzes the activation of factor B. This is Limulus clotting factor C from Carcinoscorpius rotundicauda (Mangrove horseshoe crab).